Reading from the N-terminus, the 325-residue chain is DNA-directed RNA polymerase subunit alpha (325 aa).

An alpha N-terminal domain (alpha-NTD) region spans residues 1 to 231 (MQTSLLKPKI…DQLSVFAALE (231 aa)). The segment at 246–325 (IDPILLRPVD…ENWPPAGLDK (80 aa)) is alpha C-terminal domain (alpha-CTD).

It belongs to the RNA polymerase alpha chain family. As to quaternary structure, homodimer. The RNAP catalytic core consists of 2 alpha, 1 beta, 1 beta' and 1 omega subunit. When a sigma factor is associated with the core the holoenzyme is formed, which can initiate transcription.

The enzyme catalyses RNA(n) + a ribonucleoside 5'-triphosphate = RNA(n+1) + diphosphate. Its function is as follows. DNA-dependent RNA polymerase catalyzes the transcription of DNA into RNA using the four ribonucleoside triphosphates as substrates. This Burkholderia multivorans (strain ATCC 17616 / 249) protein is DNA-directed RNA polymerase subunit alpha.